Here is a 349-residue protein sequence, read N- to C-terminus: Secretory carrier-associated membrane protein 3 (349 aa).

Residues 1 to 90 (MAQSRDTGNP…EPRNYGSYST (90 aa)) form a disordered region. Residues 1–168 (MAQSRDTGNP…PQEFQKTVST (168 aa)) lie on the Cytoplasmic side of the membrane. Serine 32 carries the post-translational modification Phosphoserine. Residue threonine 37 is modified to Phosphothreonine. Tyrosine 41 and tyrosine 53 each carry phosphotyrosine. Pro residues predominate over residues 49 to 68 (PPPAYEPPAPAPAPLPPPSA). 2 positions are modified to phosphoserine: serine 74 and serine 78. Residue tyrosine 85 is modified to Phosphotyrosine. Serine 87 is modified (phosphoserine). 4 helical membrane-spanning segments follow: residues 169–189 (MYYL…ACLA), 200–220 (GFGL…VCWY), 236–256 (FVFF…AIGI), and 277–297 (VAVL…LGIV). Residues 298–349 (MLKRIHSLYRQTGASFQKAQQEFAAGVFSNPAVRTAAANAAAGAAENAFRAP) lie on the Cytoplasmic side of the membrane. Lysine 315 is covalently cross-linked (Glycyl lysine isopeptide (Lys-Gly) (interchain with G-Cter in SUMO1)).

The protein belongs to the SCAMP family. In terms of assembly, interacts with NEDD4 and NEDD4L and TSG101. Interacts with RNF126. In terms of processing, monoubiquitinated.

It localises to the membrane. Functionally, functions in post-Golgi recycling pathways. Acts as a recycling carrier to the cell surface. The protein is Secretory carrier-associated membrane protein 3 (Scamp3) of Mus musculus (Mouse).